Reading from the N-terminus, the 357-residue chain is Alkanal monooxygenase alpha chain (357 aa).

It belongs to the bacterial luciferase oxidoreductase family. In terms of assembly, heterodimer of an alpha and a beta chain.

It catalyses the reaction a long-chain fatty aldehyde + FMNH2 + O2 = a long-chain fatty acid + hnu + FMN + H2O + 2 H(+). Its function is as follows. Light-emitting reaction in luminous bacteria. The chain is Alkanal monooxygenase alpha chain (luxA) from Kryptophanaron alfredi symbiont.